Here is a 647-residue protein sequence, read N- to C-terminus: Threonine--tRNA ligase (647 aa).

Positions 1-61 constitute a TGS domain; that stretch reads MINITFPDGA…TEDGSIEIVT (61 aa). A catalytic region spans residues 242–540; it reads DHRKLGKELD…LIENYKGAFP (299 aa). Residues Cys336, His387, and His517 each coordinate Zn(2+).

This sequence belongs to the class-II aminoacyl-tRNA synthetase family. Homodimer. Requires Zn(2+) as cofactor.

It is found in the cytoplasm. It catalyses the reaction tRNA(Thr) + L-threonine + ATP = L-threonyl-tRNA(Thr) + AMP + diphosphate + H(+). In terms of biological role, catalyzes the attachment of threonine to tRNA(Thr) in a two-step reaction: L-threonine is first activated by ATP to form Thr-AMP and then transferred to the acceptor end of tRNA(Thr). Also edits incorrectly charged L-seryl-tRNA(Thr). In Streptococcus pneumoniae (strain P1031), this protein is Threonine--tRNA ligase.